The following is a 707-amino-acid chain: DNA-binding protein RFX2 (707 aa).

Position 33 is a phosphoserine (Ser-33). Residues 204-279 constitute a DNA-binding region (RFX-type winged-helix); that stretch reads HLQWLLDNYE…YHYYGIRLKP (76 aa). Positions 297–337 are disordered; it reads QQPVHQKPRYRPAQKTDSLGESGSHSSLHSTPEQAMAAQSQ. The span at 315–337 shows a compositional bias: low complexity; it reads LGESGSHSSLHSTPEQAMAAQSQ. The residue at position 420 (Ser-420) is a Phosphoserine.

Belongs to the RFX family. In terms of assembly, homodimer; probably only forms homodimers in testis. Heterodimer; heterodimerizes with RFX1 and RFX3.

The protein localises to the nucleus. It localises to the cytoplasm. In terms of biological role, transcription factor that acts as a key regulator of spermatogenesis. Acts by regulating expression of genes required for the haploid phase during spermiogenesis, such as genes required for cilium assembly and function. Recognizes and binds the X-box, a regulatory motif with DNA sequence 5'-GTNRCC(0-3N)RGYAAC-3' present on promoters. Probably activates transcription of the testis-specific histone gene H1-6. The sequence is that of DNA-binding protein RFX2 (RFX2) from Bos taurus (Bovine).